Consider the following 255-residue polypeptide: Urease accessory protein UreD 1 (255 aa).

Belongs to the UreD family. UreD, UreF and UreG form a complex that acts as a GTP-hydrolysis-dependent molecular chaperone, activating the urease apoprotein by helping to assemble the nickel containing metallocenter of UreC. The UreE protein probably delivers the nickel.

Its subcellular location is the cytoplasm. Its function is as follows. Required for maturation of urease via the functional incorporation of the urease nickel metallocenter. This chain is Urease accessory protein UreD 1, found in Saccharopolyspora erythraea (strain ATCC 11635 / DSM 40517 / JCM 4748 / NBRC 13426 / NCIMB 8594 / NRRL 2338).